The chain runs to 207 residues: MYDYIRGVLTYISSSTMVIESQGLGFSIFAPERWLIELSSQLHRELIVYTYTVVRETEHVLYGFHTRGERECFRMLISFSGVGPKTGLAILNTFSLSQLCSIARAEDIKAIASVPGIGKKTAEKLMVDLKQKLADLLPLDAQILASWEPAKPSCMEEGIQALAALGYPKSSAERMIAEAMSELPDHASVAEILPIALKKNLQGLNKI.

The tract at residues 1–65 is domain I; it reads MYDYIRGVLT…ETEHVLYGFH (65 aa). Positions 66–144 are domain II; it reads TRGERECFRM…DLLPLDAQIL (79 aa). The interval 145–155 is flexible linker; the sequence is ASWEPAKPSCM. The interval 155-207 is domain III; the sequence is MEEGIQALAALGYPKSSAERMIAEAMSELPDHASVAEILPIALKKNLQGLNKI.

It belongs to the RuvA family. Homotetramer. Forms an RuvA(8)-RuvB(12)-Holliday junction (HJ) complex. HJ DNA is sandwiched between 2 RuvA tetramers; dsDNA enters through RuvA and exits via RuvB. An RuvB hexamer assembles on each DNA strand where it exits the tetramer. Each RuvB hexamer is contacted by two RuvA subunits (via domain III) on 2 adjacent RuvB subunits; this complex drives branch migration. In the full resolvosome a probable DNA-RuvA(4)-RuvB(12)-RuvC(2) complex forms which resolves the HJ.

It localises to the cytoplasm. Functionally, the RuvA-RuvB-RuvC complex processes Holliday junction (HJ) DNA during genetic recombination and DNA repair, while the RuvA-RuvB complex plays an important role in the rescue of blocked DNA replication forks via replication fork reversal (RFR). RuvA specifically binds to HJ cruciform DNA, conferring on it an open structure. The RuvB hexamer acts as an ATP-dependent pump, pulling dsDNA into and through the RuvAB complex. HJ branch migration allows RuvC to scan DNA until it finds its consensus sequence, where it cleaves and resolves the cruciform DNA. The sequence is that of Holliday junction branch migration complex subunit RuvA from Chlamydia abortus (strain DSM 27085 / S26/3) (Chlamydophila abortus).